The sequence spans 64 residues: Large ribosomal subunit protein bL33 (64 aa).

This sequence belongs to the bacterial ribosomal protein bL33 family.

The sequence is that of Large ribosomal subunit protein bL33 from Synechococcus sp. (strain JA-3-3Ab) (Cyanobacteria bacterium Yellowstone A-Prime).